A 64-amino-acid polypeptide reads, in one-letter code: Prokaryotic ubiquitin-like protein Pup (64 aa).

Residues 1–32 are disordered; sequence MNAKQTQIMGGGGRDEDNAEDSAQASGQVQIN. The segment at 20–58 is ARC ATPase binding; sequence EDSAQASGQVQINTEGVDSLLDEIDGLLENNAEEFVRSY. Residues 21-32 show a composition bias toward polar residues; the sequence is DSAQASGQVQIN. An Isoglutamyl lysine isopeptide (Glu-Lys) (interchain with K-? in acceptor proteins) cross-link involves residue Glu64.

It belongs to the prokaryotic ubiquitin-like protein family. In terms of assembly, strongly interacts with the proteasome-associated ATPase ARC through a hydrophobic interface; the interacting region of Pup lies in its C-terminal half. There is one Pup binding site per ARC hexamer ring.

It participates in protein degradation; proteasomal Pup-dependent pathway. Protein modifier that is covalently attached to lysine residues of substrate proteins, thereby targeting them for proteasomal degradation. The tagging system is termed pupylation. The sequence is that of Prokaryotic ubiquitin-like protein Pup from Corynebacterium glutamicum (strain R).